Reading from the N-terminus, the 366-residue chain is Carbamoyl phosphate synthase small chain (366 aa).

The tract at residues 1–170 (MLKKRYLVLE…TKSPYVSTGY (170 aa)) is CPSase. S47, G221, and G223 together coordinate L-glutamine. The 188-residue stretch at 173–360 (SVVLVDFGKK…IDMINEYKTK (188 aa)) folds into the Glutamine amidotransferase type-1 domain. The Nucleophile role is filled by C248. Residues L249, Q252, N290, G292, and Y293 each coordinate L-glutamine. Active-site residues include H333 and E335.

It belongs to the CarA family. Composed of two chains; the small (or glutamine) chain promotes the hydrolysis of glutamine to ammonia, which is used by the large (or ammonia) chain to synthesize carbamoyl phosphate. Tetramer of heterodimers (alpha,beta)4.

It carries out the reaction hydrogencarbonate + L-glutamine + 2 ATP + H2O = carbamoyl phosphate + L-glutamate + 2 ADP + phosphate + 2 H(+). It catalyses the reaction L-glutamine + H2O = L-glutamate + NH4(+). The protein operates within amino-acid biosynthesis; L-arginine biosynthesis; carbamoyl phosphate from bicarbonate: step 1/1. It functions in the pathway pyrimidine metabolism; UMP biosynthesis via de novo pathway; (S)-dihydroorotate from bicarbonate: step 1/3. Its function is as follows. Small subunit of the glutamine-dependent carbamoyl phosphate synthetase (CPSase). CPSase catalyzes the formation of carbamoyl phosphate from the ammonia moiety of glutamine, carbonate, and phosphate donated by ATP, constituting the first step of 2 biosynthetic pathways, one leading to arginine and/or urea and the other to pyrimidine nucleotides. The small subunit (glutamine amidotransferase) binds and cleaves glutamine to supply the large subunit with the substrate ammonia. In Staphylococcus saprophyticus subsp. saprophyticus (strain ATCC 15305 / DSM 20229 / NCIMB 8711 / NCTC 7292 / S-41), this protein is Carbamoyl phosphate synthase small chain.